A 322-amino-acid chain; its full sequence is uncharacterized protein (322 aa).

A helical transmembrane segment spans residues 299 to 319 (GLLLEGTIVALILLEIILALA).

Its subcellular location is the membrane. This is an uncharacterized protein from Methanocaldococcus jannaschii (strain ATCC 43067 / DSM 2661 / JAL-1 / JCM 10045 / NBRC 100440) (Methanococcus jannaschii).